Consider the following 334-residue polypeptide: G2/mitotic-specific cyclin-1 (334 aa).

It belongs to the cyclin family. Cyclin AB subfamily.

In terms of biological role, essential for the control of the cell cycle at the G2/M (mitosis) transition. This Trypanosoma brucei brucei protein is G2/mitotic-specific cyclin-1 (CYC1).